The following is a 547-amino-acid chain: Chaperonin GroEL (547 aa).

Residues 30-33 (TLGP), Lys51, 87-91 (DGTTT), Gly415, and Asp496 contribute to the ATP site.

This sequence belongs to the chaperonin (HSP60) family. Forms a cylinder of 14 subunits composed of two heptameric rings stacked back-to-back. Interacts with the co-chaperonin GroES.

It is found in the cytoplasm. It carries out the reaction ATP + H2O + a folded polypeptide = ADP + phosphate + an unfolded polypeptide.. Functionally, together with its co-chaperonin GroES, plays an essential role in assisting protein folding. The GroEL-GroES system forms a nano-cage that allows encapsulation of the non-native substrate proteins and provides a physical environment optimized to promote and accelerate protein folding. This Haemophilus ducreyi (strain 35000HP / ATCC 700724) protein is Chaperonin GroEL.